A 157-amino-acid chain; its full sequence is Transcriptional regulator MraZ (157 aa).

2 SpoVT-AbrB domains span residues 7–54 (TYTM…GTSL) and 83–126 (TEML…EPER).

It belongs to the MraZ family. In terms of assembly, forms oligomers.

The protein resides in the cytoplasm. The protein localises to the nucleoid. The chain is Transcriptional regulator MraZ from Azorhizobium caulinodans (strain ATCC 43989 / DSM 5975 / JCM 20966 / LMG 6465 / NBRC 14845 / NCIMB 13405 / ORS 571).